Reading from the N-terminus, the 561-residue chain is Putative transport protein Ent638_1362 (561 aa).

5 consecutive transmembrane segments (helical) span residues 8–28, 32–52, 66–86, 94–114, and 158–178; these read LLNG…LCLG, LGSV…LLGQ, FMLF…SIFF, MLAL…GKLF, and HLSL…IVAA. 2 consecutive RCK C-terminal domains span residues 202–288 and 292–373; these read LDTD…SFRN and VFDR…RIGF. 5 consecutive transmembrane segments (helical) span residues 383 to 403, 406 to 426, 447 to 467, 475 to 495, and 540 to 560; these read LLAF…TFQF, FSFG…LGFL, FGLM…IGHS, MLVA…LFGA, and AIAN…WPGL.

This sequence belongs to the AAE transporter (TC 2.A.81) family. YbjL subfamily.

The protein resides in the cell membrane. The polypeptide is Putative transport protein Ent638_1362 (Enterobacter sp. (strain 638)).